We begin with the raw amino-acid sequence, 115 residues long: Large ribosomal subunit protein P1 (115 aa).

Positions 56-73 are enriched in low complexity; the sequence is QAAAAPVPASGGAAAPAE. The interval 56–115 is disordered; sequence QAAAAPVPASGGAAAPAEGDADEADEADEEAEEEAADDGGDDDDDEDDEASGEGLGELFG. Residues 74-106 are compositionally biased toward acidic residues; the sequence is GDADEADEADEEAEEEAADDGGDDDDDEDDEAS.

The protein belongs to the eukaryotic ribosomal protein P1/P2 family. Part of the 50S ribosomal subunit. Homodimer, it forms part of the ribosomal stalk which helps the ribosome interact with GTP-bound translation factors. Forms a heptameric uL10/P0(P1)2(P1)2(P1)2 complex, where uL10/P0 forms an elongated spine to which the P1 dimers bind in a sequential fashion.

Forms part of the ribosomal stalk, playing a central role in the interaction of the ribosome with GTP-bound translation factors. This Haloarcula marismortui (strain ATCC 43049 / DSM 3752 / JCM 8966 / VKM B-1809) (Halobacterium marismortui) protein is Large ribosomal subunit protein P1.